The sequence spans 237 residues: ATP synthase subunit a (237 aa).

The next 4 helical transmembrane spans lie at 17–37 (LSDM…AVAA), 78–98 (LGVT…PFWL), 178–198 (ILLG…CGSI), and 201–221 (MVIM…AFIF).

The protein belongs to the ATPase A chain family. As to quaternary structure, F-type ATPases have 2 components, CF(1) - the catalytic core - and CF(0) - the membrane proton channel. CF(1) has five subunits: alpha(3), beta(3), gamma(1), delta(1), epsilon(1). CF(0) has three main subunits: a(1), b(2) and c(9-12). The alpha and beta chains form an alternating ring which encloses part of the gamma chain. CF(1) is attached to CF(0) by a central stalk formed by the gamma and epsilon chains, while a peripheral stalk is formed by the delta and b chains.

It localises to the cell membrane. Its function is as follows. Key component of the proton channel; it plays a direct role in the translocation of protons across the membrane. The sequence is that of ATP synthase subunit a from Bacillus caldotenax.